A 366-amino-acid polypeptide reads, in one-letter code: Fructose-bisphosphate aldolase 2 (366 aa).

Positions 60 and 150 each coordinate substrate. The active-site Proton acceptor is Glu191. The active-site Schiff-base intermediate with dihydroxyacetone-P is the Lys233.

Belongs to the class I fructose-bisphosphate aldolase family.

The enzyme catalyses beta-D-fructose 1,6-bisphosphate = D-glyceraldehyde 3-phosphate + dihydroxyacetone phosphate. It participates in carbohydrate degradation; glycolysis; D-glyceraldehyde 3-phosphate and glycerone phosphate from D-glucose: step 4/4. This chain is Fructose-bisphosphate aldolase 2 (aldo-2), found in Caenorhabditis elegans.